A 484-amino-acid polypeptide reads, in one-letter code: Aspartyl/glutamyl-tRNA(Asn/Gln) amidotransferase subunit B (484 aa).

It belongs to the GatB/GatE family. GatB subfamily. In terms of assembly, heterotrimer of A, B and C subunits.

The enzyme catalyses L-glutamyl-tRNA(Gln) + L-glutamine + ATP + H2O = L-glutaminyl-tRNA(Gln) + L-glutamate + ADP + phosphate + H(+). It carries out the reaction L-aspartyl-tRNA(Asn) + L-glutamine + ATP + H2O = L-asparaginyl-tRNA(Asn) + L-glutamate + ADP + phosphate + 2 H(+). In terms of biological role, allows the formation of correctly charged Asn-tRNA(Asn) or Gln-tRNA(Gln) through the transamidation of misacylated Asp-tRNA(Asn) or Glu-tRNA(Gln) in organisms which lack either or both of asparaginyl-tRNA or glutaminyl-tRNA synthetases. The reaction takes place in the presence of glutamine and ATP through an activated phospho-Asp-tRNA(Asn) or phospho-Glu-tRNA(Gln). The sequence is that of Aspartyl/glutamyl-tRNA(Asn/Gln) amidotransferase subunit B from Bordetella bronchiseptica (strain ATCC BAA-588 / NCTC 13252 / RB50) (Alcaligenes bronchisepticus).